The following is a 212-amino-acid chain: Thymidylate kinase (212 aa).

10–17 (GPDGAGKT) contacts ATP.

This sequence belongs to the thymidylate kinase family.

It carries out the reaction dTMP + ATP = dTDP + ADP. Functionally, phosphorylation of dTMP to form dTDP in both de novo and salvage pathways of dTTP synthesis. The sequence is that of Thymidylate kinase from Enterococcus faecalis (strain ATCC 700802 / V583).